The sequence spans 453 residues: Bifunctional protein GlmU (453 aa).

The interval 1-225 is pyrophosphorylase; the sequence is MHAHVILAAG…AEEALGVNTR (225 aa). UDP-N-acetyl-alpha-D-glucosamine-binding positions include 7-10, Lys-21, Gln-72, and 77-78; these read LAAG and GT. Residue Asp-102 participates in Mg(2+) binding. The UDP-N-acetyl-alpha-D-glucosamine site is built by Gly-138, Glu-152, Asn-167, and Asn-223. Residue Asn-223 coordinates Mg(2+). Residues 226–246 form a linker region; the sequence is EELARVEGVLLRRLRAEWMGK. The N-acetyltransferase stretch occupies residues 247–453; that stretch reads GVRMILPETI…GYALRKLGEG (207 aa). Positions 329 and 347 each coordinate UDP-N-acetyl-alpha-D-glucosamine. Residue His-359 is the Proton acceptor of the active site. Positions 362 and 373 each coordinate UDP-N-acetyl-alpha-D-glucosamine. Acetyl-CoA-binding positions include Ala-376, 382-383, Ser-401, Ala-419, and Arg-436; that span reads NY.

In the N-terminal section; belongs to the N-acetylglucosamine-1-phosphate uridyltransferase family. The protein in the C-terminal section; belongs to the transferase hexapeptide repeat family. In terms of assembly, homotrimer. The cofactor is Mg(2+).

The protein localises to the cytoplasm. It carries out the reaction alpha-D-glucosamine 1-phosphate + acetyl-CoA = N-acetyl-alpha-D-glucosamine 1-phosphate + CoA + H(+). The catalysed reaction is N-acetyl-alpha-D-glucosamine 1-phosphate + UTP + H(+) = UDP-N-acetyl-alpha-D-glucosamine + diphosphate. Its pathway is nucleotide-sugar biosynthesis; UDP-N-acetyl-alpha-D-glucosamine biosynthesis; N-acetyl-alpha-D-glucosamine 1-phosphate from alpha-D-glucosamine 6-phosphate (route II): step 2/2. It functions in the pathway nucleotide-sugar biosynthesis; UDP-N-acetyl-alpha-D-glucosamine biosynthesis; UDP-N-acetyl-alpha-D-glucosamine from N-acetyl-alpha-D-glucosamine 1-phosphate: step 1/1. The protein operates within bacterial outer membrane biogenesis; LPS lipid A biosynthesis. Catalyzes the last two sequential reactions in the de novo biosynthetic pathway for UDP-N-acetylglucosamine (UDP-GlcNAc). The C-terminal domain catalyzes the transfer of acetyl group from acetyl coenzyme A to glucosamine-1-phosphate (GlcN-1-P) to produce N-acetylglucosamine-1-phosphate (GlcNAc-1-P), which is converted into UDP-GlcNAc by the transfer of uridine 5-monophosphate (from uridine 5-triphosphate), a reaction catalyzed by the N-terminal domain. The chain is Bifunctional protein GlmU from Thermus thermophilus (strain ATCC BAA-163 / DSM 7039 / HB27).